Here is a 406-residue protein sequence, read N- to C-terminus: GTPase Obg (406 aa).

The Obg domain maps to 1–159; the sequence is MRFVDEAVIT…REIRLELKVL (159 aa). The tract at residues 120–143 is disordered; sequence GGEGGLGNTHFKSSTNRAPRKCTT. An OBG-type G domain is found at 160 to 333; that stretch reads ADVGLLGMPN…VVYYLMDQIE (174 aa). Residues 166–173, 191–195, 213–216, 283–286, and 314–316 contribute to the GTP site; these read GMPNAGKS, FTTMV, DIPG, NKLD, and SGL. Mg(2+) is bound by residues Ser-173 and Thr-193. The tract at residues 381–406 is disordered; that stretch reads ESMMDDDDDFDDDEDDGDVESIYVRD. Over residues 383-399 the composition is skewed to acidic residues; that stretch reads MMDDDDDFDDDEDDGDV.

The protein belongs to the TRAFAC class OBG-HflX-like GTPase superfamily. OBG GTPase family. In terms of assembly, monomer. It depends on Mg(2+) as a cofactor.

It localises to the cytoplasm. An essential GTPase which binds GTP, GDP and possibly (p)ppGpp with moderate affinity, with high nucleotide exchange rates and a fairly low GTP hydrolysis rate. Plays a role in control of the cell cycle, stress response, ribosome biogenesis and in those bacteria that undergo differentiation, in morphogenesis control. The chain is GTPase Obg from Acinetobacter baumannii (strain ACICU).